The sequence spans 155 residues: Ribosomal RNA large subunit methyltransferase H (155 aa).

S-adenosyl-L-methionine-binding positions include leucine 72, glycine 103, and 122 to 127 (LSALTL).

The protein belongs to the RNA methyltransferase RlmH family. Homodimer.

It localises to the cytoplasm. It catalyses the reaction pseudouridine(1915) in 23S rRNA + S-adenosyl-L-methionine = N(3)-methylpseudouridine(1915) in 23S rRNA + S-adenosyl-L-homocysteine + H(+). Specifically methylates the pseudouridine at position 1915 (m3Psi1915) in 23S rRNA. The polypeptide is Ribosomal RNA large subunit methyltransferase H (Salmonella choleraesuis (strain SC-B67)).